An 819-amino-acid chain; its full sequence is Advillin (819 aa).

Positions 1 to 731 (MSLSSAFRTV…YEQLKNELGD (731 aa)) are core. Residues 24–105 (MELVLVPLSA…VQYHESDTFR (82 aa)) form a Gelsolin-like 1 repeat. Y85 carries the phosphotyrosine modification. Residues 109–116 (KRGIIYKK) and 135–143 (RLLHVKGKR) contribute to the a 1,2-diacyl-sn-glycero-3-phospho-(1D-myo-inositol-4,5-bisphosphate) site. Gelsolin-like repeat units lie at residues 144–215 (NIRA…KEAA), 265–339 (TEVA…SAMF), 407–486 (LVPV…RHFM), 524–592 (NTKA…PEFW), and 631–704 (TEVT…PPTF). Residues 628 to 819 (FLVTEVTDFT…LQLKKEAGLF (192 aa)) form a required for interaction with F-actin region. The headpiece stretch occupies residues 731-819 (DATAIVRITT…LQLKKEAGLF (89 aa)). The HP domain maps to 753–819 (ESGPKYYPVE…LQLKKEAGLF (67 aa)). Y758 bears the Phosphotyrosine mark.

It belongs to the villin/gelsolin family. As to quaternary structure, associates (via C-terminus) with actin. Interacts with F-actin. Interacts with SCARF1; the interaction occurs in embryonic dorsal root ganglions at 18 dpc and induces neurite-like outgrowth. Interacts with PLCE1. Interacts with ACTR2 and ACTR3; associates with the ARP2/3 complex. In terms of tissue distribution, expressed in dorsal root ganglion (DRG) neurons and superior cervical ganglia (SCG). Expressed in podocytes.

The protein resides in the cytoplasm. The protein localises to the cytoskeleton. Its subcellular location is the cell projection. It localises to the neuron projection. It is found in the axon. The protein resides in the lamellipodium. The protein localises to the cell junction. Its subcellular location is the focal adhesion. Ca(2+)-regulated actin-binding protein which plays an important role in actin bundling. May have a unique function in the morphogenesis of neuronal cells which form ganglia. Required for SREC1-mediated regulation of neurite-like outgrowth. Plays a role in regenerative sensory axon outgrowth and remodeling processes after peripheral injury in neonates. Involved in the formation of long fine actin-containing filopodia-like structures in fibroblast. Plays a role in ciliogenesis. In podocytes, controls lamellipodia formation through the regulation of EGF-induced diacylglycerol generation by PLCE1 and ARP2/3 complex assembly. The chain is Advillin from Rattus norvegicus (Rat).